The chain runs to 204 residues: Acyl-homoserine-lactone synthase (204 aa).

This sequence belongs to the autoinducer synthase family.

It catalyses the reaction a fatty acyl-[ACP] + S-adenosyl-L-methionine = an N-acyl-L-homoserine lactone + S-methyl-5'-thioadenosine + holo-[ACP] + H(+). In terms of biological role, required for the synthesis of acyl-HSL autoinducers that bind to SolR. The chain is Acyl-homoserine-lactone synthase (solI) from Ralstonia nicotianae (strain ATCC BAA-1114 / GMI1000) (Ralstonia solanacearum).